A 1894-amino-acid chain; its full sequence is Plexin-A4 (1894 aa).

Positions 1–23 are cleaved as a signal peptide; it reads MKAMPWNWTCLLSHLLMVGMGSS. The region spanning 24–507 is the Sema domain; it reads TLLTRQPAPL…SERQLTRVPV (484 aa). Topologically, residues 24–1237 are extracellular; the sequence is TLLTRQPAPL…IAPDSPLSLP (1214 aa). Intrachain disulfides connect Cys-95–Cys-104, Cys-130–Cys-138, Cys-284–Cys-405, Cys-300–Cys-356, Cys-374–Cys-393, Cys-510–Cys-527, Cys-516–Cys-558, Cys-519–Cys-536, Cys-530–Cys-542, and Cys-593–Cys-612. A PSI 1 domain is found at 509–559; the sequence is SCGQYQSCGECLGSGDPHCGWCVLHNTCTRKERCERSKEPRRFASEMKQCV. N-linked (GlcNAc...) asparagine glycosylation occurs at Asn-655. PSI domains are found at residues 655 to 702 and 803 to 856; these read NCSV…EDCP and KCGA…SKCT. 4 consecutive IPT/TIG domains span residues 858–952, 954–1037, 1040–1139, and 1142–1230; these read PRIT…YYFM, LTLS…FQYV, PTIV…FTYY, and PVFE…YIAP. N-linked (GlcNAc...) asparagine glycosylation is found at Asn-1007, Asn-1132, and Asn-1180. A helical membrane pass occupies residues 1238-1258; that stretch reads AIVSIAVAGGLLIIFIVAVLI. The Cytoplasmic portion of the chain corresponds to 1259–1894; it reads AYKRKSRESD…QVITLMSLDS (636 aa). The residue at position 1350 (Lys-1350) is an N6-acetyllysine.

This sequence belongs to the plexin family. As to quaternary structure, interacts with NRP1 and NRP2.

Its subcellular location is the cell membrane. Functionally, coreceptor for SEMA3A. Necessary for signaling by class 3 semaphorins and subsequent remodeling of the cytoskeleton. Plays a role in axon guidance in the developing nervous system. Class 3 semaphorins bind to a complex composed of a neuropilin and a plexin. The plexin modulates the affinity of the complex for specific semaphorins, and its cytoplasmic domain is required for the activation of down-stream signaling events in the cytoplasm. The chain is Plexin-A4 (PLXNA4) from Homo sapiens (Human).